A 318-amino-acid polypeptide reads, in one-letter code: Replication factor C small subunit (318 aa).

43–50 lines the ATP pocket; sequence GPAGTGKT.

The protein belongs to the activator 1 small subunits family. RfcS subfamily. In terms of assembly, heteromultimer composed of small subunits (RfcS) and large subunits (RfcL).

Functionally, part of the RFC clamp loader complex which loads the PCNA sliding clamp onto DNA. The polypeptide is Replication factor C small subunit (Picrophilus torridus (strain ATCC 700027 / DSM 9790 / JCM 10055 / NBRC 100828 / KAW 2/3)).